A 266-amino-acid chain; its full sequence is Integral membrane protein 2B (266 aa).

At 1–54 the chain is on the cytoplasmic side; it reads MVKVTFNSALAQKEAKKDEPKSGEEALIIPPDAVAVDCKDPDDVVPVGQRRAWC. A helical; Signal-anchor for type II membrane protein transmembrane segment spans residues 55-75; the sequence is WCMCFGLAFMLAGVILGGAYL. The Lumenal segment spans residues 76–266; sequence YKYFALQPDD…KFAVETLICS (191 aa). A necessary for interaction with APP and inhibitor effects on APP processing region spans residues 102–134; sequence EPSADAPAALYQTIEENIKIFEEEEVEFISVPV. Residues 137 to 231 form the BRICHOS domain; it reads FADSDPANIV…LCHDKETYKL (95 aa). 2 disulfides stabilise this stretch: C164-C223 and C248-C265. N-linked (GlcNAc...) asparagine glycosylation is present at N170.

The protein belongs to the ITM2 family. In terms of assembly, homodimer; disulfide-linked. Interacts with SPPL2A and SPPL2B. Interacts with APP. Mature BRI2 (mBRI2) interacts with the APP amyloid-beta A4 protein; the interaction occurs at the cell surface and in the endocytic compartments and enable alpha- and beta-secretase-induced APP cleavage inhibition. Mature BRI2 (mBRI2) interacts with the APP C99; the interaction occurs in the endocytic compartments and enable gamma-secretase-induced C99 cleavage inhibition. May form heterodimers with Bri23 peptide and APP amyloid-beta protein 40. Interacts with ADAM7 in sperm; the interaction increases following capacitation. In terms of processing, the ectodomain C-terminal part of the imBRI2 is processed by furin producing a secreted Bri23 peptide and a mature BRI2, membrane form (mBRI2). The remaining part of the ectodomain of mBRI2 containing the BRICHOS domain is cleaved by ADAM10 and is secreted (BRI2C, soluble form). The membrane-bound N-terminal fragment (BRI2C, membrane form) is further proteolytically processed by SPPL2A and SPPL2B through regulated intramembrane proteolysis producing a secreted C-peptide and a BRI2 intracellular domain (BRI2 ICD) released in the cytosol. Shedding by ADAM10 facilitates intramembrane cleavage but is not absolutely required for BRI2 ICD generation. Glycosylation at Asn-170 is important for cell surface localization, but doesn't affect furin- and ADAM10-induced proteolytic processing. Ubiquitous. Expressed in brain.

The protein resides in the golgi apparatus membrane. The protein localises to the cell membrane. It is found in the endosome membrane. It localises to the secreted. Functionally, plays a regulatory role in the processing of the amyloid-beta A4 precursor protein (APP) and acts as an inhibitor of the amyloid-beta peptide aggregation and fibrils deposition. Plays a role in the induction of neurite outgrowth. Functions as a protease inhibitor by blocking access of secretases to APP cleavage sites. Mature BRI2 (mBRI2) functions as a modulator of the amyloid-beta A4 precursor protein (APP) processing leading to a strong reduction in the secretion of secretase-processed amyloid-beta protein 40 and amyloid-beta protein 42. Its function is as follows. Bri23 peptide prevents aggregation of APP amyloid-beta protein 42 into toxic oligomers. This is Integral membrane protein 2B (ITM2B) from Homo sapiens (Human).